A 213-amino-acid polypeptide reads, in one-letter code: Pyridoxine/pyridoxamine 5'-phosphate oxidase (213 aa).

Substrate-binding positions include 8–11 (RKNY) and lysine 66. FMN is bound by residues 61–66 (RIVLIK), 76–77 (FT), arginine 82, lysine 83, and glutamine 105. Residues tyrosine 123, arginine 127, and serine 131 each contribute to the substrate site. FMN-binding positions include 140-141 (QS) and tryptophan 184. 190-192 (RLH) provides a ligand contact to substrate. Residue arginine 194 coordinates FMN.

The protein belongs to the pyridoxamine 5'-phosphate oxidase family. Homodimer. It depends on FMN as a cofactor.

It catalyses the reaction pyridoxamine 5'-phosphate + O2 + H2O = pyridoxal 5'-phosphate + H2O2 + NH4(+). It carries out the reaction pyridoxine 5'-phosphate + O2 = pyridoxal 5'-phosphate + H2O2. It functions in the pathway cofactor metabolism; pyridoxal 5'-phosphate salvage; pyridoxal 5'-phosphate from pyridoxamine 5'-phosphate: step 1/1. The protein operates within cofactor metabolism; pyridoxal 5'-phosphate salvage; pyridoxal 5'-phosphate from pyridoxine 5'-phosphate: step 1/1. In terms of biological role, catalyzes the oxidation of either pyridoxine 5'-phosphate (PNP) or pyridoxamine 5'-phosphate (PMP) into pyridoxal 5'-phosphate (PLP). The sequence is that of Pyridoxine/pyridoxamine 5'-phosphate oxidase from Paraburkholderia xenovorans (strain LB400).